The primary structure comprises 292 residues: Medium chain reductase/dehydrogenase ucsI (292 aa).

Cys43 contributes to the Zn(2+) binding site. Tyr49 lines the substrate pocket. Zn(2+) is bound by residues His65 and Glu66. Residues 184–189 (GCGPVG), Asp208, Arg213, and 276–278 (IGA) each bind NAD(+).

This sequence belongs to the zinc-containing alcohol dehydrogenase family. It depends on Zn(2+) as a cofactor.

It participates in mycotoxin biosynthesis. Medium chain reductase/dehydrogenase; part of the gene cluster that mediates the biosynthesis of UCS1025A, a member of the pyrrolizidinone family that acts as a strong telomerase inhibitor and displays potent antibacterial and antitumor properties. These compounds share a hemiaminal-containing pyrrolizidinone core fused with a gamma-lactone, giving a furopyrrolizidine that is connected to a decalin fragment. The polyketide synthase module (PKS) of the PKS-NRPS ucsA is responsible for the synthesis of the polyketide backbone via the condensation of an acetyl-CoA starter unit with 6 malonyl-CoA units. The downstream nonribosomal peptide synthetase (NRPS) module then amidates the carboxyl end of the polyketide with a 2S,3S-methylproline derived from L-isoleucine by the 2-oxoglutarate-dependent dioxygenase ucsF which converts L-isoleucine to (4S,5S)-4-methylpyrroline-5-carboxylate that is further converted to 2S,3S-methylproline by the pyrroline-5-carboxylate reductase ucsG. Reductive release of the completed aminoacyl polyketide from the assembly line can form the 3-pyrrolin-2-one structure via an intramolecular Knoevenagel reaction. Because ucsA lacks a designated enoylreductase (ER) domain, the required activity is provided the enoyl reductase ucsL. This keto acyclic precursor is the substrate of the Diels-Alderase ucsH, that catalyzes the Diels-Alder cycloaddition. Oxidation of the 3S-methyl group to a carboxylate by the cytochrome P450 monooxygenase ucsK allows an oxa-Michael cyclization that might involve the reductase/dehydrogenase ucsI and which furnishes the furopyrrolizidine. The oxidase ucsJ likely plays a critical role in stereoselective reduction of the C5-C6 double bond to afford the required R-configured carboxylate group. Further enolization and oxidation at C5 by an unidentified enzyme affords the last intermediate that can undergo oxa-Michael cyclization to yield UCS1025A. This is Medium chain reductase/dehydrogenase ucsI from Acremonium sp.